We begin with the raw amino-acid sequence, 237 residues long: Zinc finger protein 22 (237 aa).

The interval 1 to 33 (MRLGKPKGGISRSASQGKTYESKRKTARQRQKW) is disordered. N6-acetyllysine occurs at positions 18 and 23. C2H2-type zinc fingers lie at residues 55–82 (YKCTKCSKSFSQSSTLFQHKKIHTGKKS), 83–110 (HKCADCGKSFFQSSNLIQHRRIHTGEKP), 111–138 (YKCDECGERFKQSSNLIQHQRIHTGEKP), 139–166 (YCCDECGRCFSQSSHLIQHQRTHTGEKP), and 167–194 (YQCEECDKCFSQSSHLRQHMKVHKEKKS). Positions 188-217 (VHKEKKSHKRGKNARAKTHPVSWKRGKGRK) are enriched in basic residues. Residues 188-218 (VHKEKKSHKRGKNARAKTHPVSWKRGKGRKA) form a disordered region.

The protein belongs to the krueppel C2H2-type zinc-finger protein family. Highly expressed in the ameloblast layer of mandibular incisors, moderately expressed in submandibular gland, calvaria, kidney and lung, and expressed at low levels in brain and thymus.

It localises to the nucleus. Functionally, binds DNA through the consensus sequence 5'-CAATG-3'. May be involved in transcriptional regulation and may play a role in tooth formation. This is Zinc finger protein 22 (Znf22) from Rattus norvegicus (Rat).